We begin with the raw amino-acid sequence, 288 residues long: GCN5-related N-acetyltransferase 6, chloroplastic (288 aa).

A chloroplast-targeting transit peptide spans 1-111 (MSTISIHRTE…YWTAAWLRAE (111 aa)). One can recognise an N-acetyltransferase domain in the interval 151–288 (SCIVAVKKEE…DDTYLLQYTS (138 aa)). Acetyl-CoA contacts are provided by residues 215–217 (LCV), 223–228 (RQGIAC), 254–256 (NSV), and tyrosine 261. The Proton donor role is filled by tyrosine 261.

The protein belongs to the acetyltransferase family. GNAT subfamily. As to quaternary structure, oligomer. Post-translationally, autoacetylated. As to expression, expressed in green tissues and in roots.

It localises to the plastid. Its subcellular location is the chloroplast. The protein resides in the cytoplasm. It is found in the perinuclear region. The catalysed reaction is an N-terminal L-alpha-aminoacyl-[protein] + acetyl-CoA = N-terminal N(alpha)-acetyl-L-alpha-aminoacyl-[protein] + CoA + H(+). The enzyme catalyses L-lysyl-[protein] + acetyl-CoA = N(6)-acetyl-L-lysyl-[protein] + CoA + H(+). It catalyses the reaction N-terminal L-alanyl-[protein] + acetyl-CoA = N-terminal N(alpha)-acetyl-L-alanyl-[protein] + CoA + H(+). It carries out the reaction N-terminal L-seryl-[protein] + acetyl-CoA = N-terminal N(alpha)-acetyl-L-seryl-[protein] + CoA + H(+). The catalysed reaction is N-terminal L-threonyl-[protein] + acetyl-CoA = N-terminal N(alpha)-acetyl-L-threonyl-[protein] + CoA + H(+). The enzyme catalyses N-terminal L-methionyl-[protein] + acetyl-CoA = N-terminal N(alpha)-acetyl-L-methionyl-[protein] + CoA + H(+). It catalyses the reaction N-terminal L-valyl-[protein] + acetyl-CoA = N-terminal N(alpha)-acetyl-L-valyl-[protein] + CoA + H(+). Functionally, protein acetyltransferase with dual specificity triggering both N-alpha-acetylation (NTA), with a large spectrum of modified N-termini, including methionine, alanine, serine, threonine and to a lower extent valine as substrates, and epsilon-lysine acetylation (KA). This chain is GCN5-related N-acetyltransferase 6, chloroplastic, found in Arabidopsis thaliana (Mouse-ear cress).